Consider the following 369-residue polypeptide: Anhydro-N-acetylmuramic acid kinase (369 aa).

Glycine 9–aspartate 16 is an ATP binding site.

It belongs to the anhydro-N-acetylmuramic acid kinase family.

It catalyses the reaction 1,6-anhydro-N-acetyl-beta-muramate + ATP + H2O = N-acetyl-D-muramate 6-phosphate + ADP + H(+). It participates in amino-sugar metabolism; 1,6-anhydro-N-acetylmuramate degradation. The protein operates within cell wall biogenesis; peptidoglycan recycling. Its function is as follows. Catalyzes the specific phosphorylation of 1,6-anhydro-N-acetylmuramic acid (anhMurNAc) with the simultaneous cleavage of the 1,6-anhydro ring, generating MurNAc-6-P. Is required for the utilization of anhMurNAc either imported from the medium or derived from its own cell wall murein, and thus plays a role in cell wall recycling. This is Anhydro-N-acetylmuramic acid kinase from Phenylobacterium zucineum (strain HLK1).